A 512-amino-acid chain; its full sequence is Respiratory nitrate reductase 1 beta chain (512 aa).

4Fe-4S ferredoxin-type domains follow at residues 7–35 (VGMV…SREG), 175–206 (TFMM…KREE), and 208–237 (GIVL…FNWK). The [4Fe-4S] cluster site is built by Cys-16, Cys-19, Cys-22, Cys-26, Cys-184, Cys-187, and Cys-192. [3Fe-4S] cluster contacts are provided by Cys-196, Cys-217, and Cys-223. 5 residues coordinate [4Fe-4S] cluster: Cys-227, Cys-244, Cys-247, Cys-259, and Cys-263.

In terms of assembly, dimer of heterotrimers each composed of an alpha, a beta and a gamma chain. Alpha and beta are catalytic chains; gamma chains are involved in binding the enzyme complex to the cytoplasmic membrane. It depends on [4Fe-4S] cluster as a cofactor. Requires [3Fe-4S] cluster as cofactor.

It is found in the cell membrane. The enzyme catalyses nitrate + a quinol = a quinone + nitrite + H2O. Its function is as follows. The nitrate reductase enzyme complex allows E.coli to use nitrate as an electron acceptor during anaerobic growth. The beta chain is an electron transfer unit containing four cysteine clusters involved in the formation of iron-sulfur centers. Electrons are transferred from the gamma chain to the molybdenum cofactor of the alpha subunit. This Escherichia coli (strain K12) protein is Respiratory nitrate reductase 1 beta chain (narH).